Consider the following 689-residue polypeptide: Beta-galactosidase Pbg (689 aa).

Arg118 is a binding site for substrate. Zn(2+) is bound at residue Cys122. Substrate is bound at residue Asn156. Glu157 functions as the Proton donor in the catalytic mechanism. The Zn(2+) site is built by Cys162, Cys164, and Cys167. Catalysis depends on Glu318, which acts as the Nucleophile. Substrate is bound by residues Trp326 and 366 to 369 (EKFH).

Belongs to the glycosyl hydrolase 42 family.

The catalysed reaction is Hydrolysis of terminal non-reducing beta-D-galactose residues in beta-D-galactosides.. The sequence is that of Beta-galactosidase Pbg from Clostridium perfringens (strain ATCC 13124 / DSM 756 / JCM 1290 / NCIMB 6125 / NCTC 8237 / Type A).